A 530-amino-acid polypeptide reads, in one-letter code: Retinoic acid-induced protein 2 (530 aa).

Over residues 1 to 13 the composition is skewed to polar residues; sequence MDDLQSQNLSMDM. The segment at 1–22 is disordered; it reads MDDLQSQNLSMDMTDSPPALAN.

This chain is Retinoic acid-induced protein 2 (RAI2), found in Homo sapiens (Human).